A 499-amino-acid chain; its full sequence is MFKKIMKGGHRKPSKSEANEPSSYGIGLPDNRSGPGSNVVVSHASRGALVNSSPSPVTATPPPPPLGSVEPLPLFRDVPVSERQTLFLRKLQNCCFLFDFTDTIKNARDKEIKRQTLLELVDFIQSGSSKISESCQEEMIKMISVNIFRSLPPASHENTGQEPADPEEEEPYLEPSWPHLQLVYELLLRYVVSTDTDTKVAKRYIDHSFVLKLLDLFDSEDPREREYLKTILHRIYGKFMVHRPFIRKAINNIFYRFIYETERHSGIGELLEILGSIINGFALPMKEEHKLFLIRVLIPLHKPKPIVVYHQQLSYCIVQFVEKDYKLADTVIRGLLKYWPVTNCSKENLFLGELEEVLEATQPVEFQRCMVPLFQQIGRCLTSSHFQVAERALFLWNNEHIVGLIAQNRSVILPIIYPTLEKNIQSHWNQAVHGLTTNIKKMFMEMDPELFEECQRQYEEKQAKSKEVEEQRQYTWKRLAEAAAERDGGGGEEDHMITS.

The segment covering 1–13 (MFKKIMKGGHRKP) has biased composition (basic residues). Positions 1–65 (MFKKIMKGGH…PVTATPPPPP (65 aa)) are disordered.

It belongs to the phosphatase 2A regulatory subunit B56 family. PP2A consists of a common heteromeric enzyme, composed of a catalytic subunit (subunits C), a constant regulatory subunit (subunit A), and a variety of regulatory subunits such as subunits B (the R2/B/PR55/B55, R3/B''/PR72/PR130/PR59 and R5/B'/B56 families). Interacts with BZR1. Interacts with BRI1. Interacts with SRK2E/OST1. Expressed ubiquitously, higher levels in cotyledons and flowers.

It is found in the nucleus. Its subcellular location is the cytoplasm. Its function is as follows. The B regulatory subunit may modulate substrate selectivity and catalytic activity, and may also direct the localization of the catalytic enzyme to a particular subcellular compartment. Required for the formation of the PP2A holoenzyme that positively regulates brassinosteroid signaling by dephosphorylating and activating BZR1. The chain is Serine/threonine protein phosphatase 2A 57 kDa regulatory subunit B' beta isoform (B'BETA) from Arabidopsis thaliana (Mouse-ear cress).